The sequence spans 138 residues: ATP synthase epsilon chain (138 aa).

The span at 89-114 shows a compositional bias: basic and acidic residues; it reads KDTAQQEWNEAQKRLDEASKSGDRQK. The interval 89–117 is disordered; that stretch reads KDTAQQEWNEAQKRLDEASKSGDRQKQIQ.

Belongs to the ATPase epsilon chain family. F-type ATPases have 2 components, CF(1) - the catalytic core - and CF(0) - the membrane proton channel. CF(1) has five subunits: alpha(3), beta(3), gamma(1), delta(1), epsilon(1). CF(0) has three main subunits: a, b and c.

The protein resides in the cellular thylakoid membrane. Functionally, produces ATP from ADP in the presence of a proton gradient across the membrane. This chain is ATP synthase epsilon chain, found in Gloeothece citriformis (strain PCC 7424) (Cyanothece sp. (strain PCC 7424)).